The sequence spans 210 residues: Holliday junction resolvase RecU (210 aa).

Residues Thr87, Asp89, Glu102, and Gln121 each contribute to the Mg(2+) site.

Belongs to the RecU family. The cofactor is Mg(2+).

It is found in the cytoplasm. It catalyses the reaction Endonucleolytic cleavage at a junction such as a reciprocal single-stranded crossover between two homologous DNA duplexes (Holliday junction).. Functionally, endonuclease that resolves Holliday junction intermediates in genetic recombination. Cleaves mobile four-strand junctions by introducing symmetrical nicks in paired strands. Promotes annealing of linear ssDNA with homologous dsDNA. Required for DNA repair, homologous recombination and chromosome segregation. In Lactobacillus delbrueckii subsp. bulgaricus (strain ATCC 11842 / DSM 20081 / BCRC 10696 / JCM 1002 / NBRC 13953 / NCIMB 11778 / NCTC 12712 / WDCM 00102 / Lb 14), this protein is Holliday junction resolvase RecU.